The following is a 529-amino-acid chain: Peptide chain release factor 3 (529 aa).

Residues 7–275 (EQRRTFGIIS…AVVELAPSPR (269 aa)) enclose the tr-type G domain. GTP is bound by residues 16 to 23 (SHPDAGKT), 84 to 88 (DTPGH), and 138 to 141 (NKLD).

The protein belongs to the TRAFAC class translation factor GTPase superfamily. Classic translation factor GTPase family. PrfC subfamily.

The protein resides in the cytoplasm. In terms of biological role, increases the formation of ribosomal termination complexes and stimulates activities of RF-1 and RF-2. It binds guanine nucleotides and has strong preference for UGA stop codons. It may interact directly with the ribosome. The stimulation of RF-1 and RF-2 is significantly reduced by GTP and GDP, but not by GMP. The polypeptide is Peptide chain release factor 3 (Syntrophus aciditrophicus (strain SB)).